We begin with the raw amino-acid sequence, 141 residues long: Neuropeptides CP2 (141 aa).

The first 26 residues, 1-26, serve as a signal peptide directing secretion; that stretch reads MDSRICTSFARLMASALCVSTLLVTA. Positions 75 to 94 are disordered; sequence KVDMPLPRQRTSSRSSERWA. Histidine amide is present on His140.

As to expression, neurons.

It is found in the secreted. In terms of biological role, mediates intrinsic neuromodulation. The protein is Neuropeptides CP2 (CP2PP) of Aplysia californica (California sea hare).